The following is a 320-amino-acid chain: Phosphatidylserine decarboxylase proenzyme (320 aa).

Active-site charge relay system; for autoendoproteolytic cleavage activity residues include Asp90, His147, and Ser254. Ser254 acts as the Schiff-base intermediate with substrate; via pyruvic acid; for decarboxylase activity in catalysis. Ser254 is subject to Pyruvic acid (Ser); by autocatalysis. Residues 288–320 (EASTAAEPAPLPEEEIRAEHRASPLVDDTQDQG) are disordered.

It belongs to the phosphatidylserine decarboxylase family. PSD-B subfamily. Prokaryotic type I sub-subfamily. As to quaternary structure, heterodimer of a large membrane-associated beta subunit and a small pyruvoyl-containing alpha subunit. Pyruvate serves as cofactor. Is synthesized initially as an inactive proenzyme. Formation of the active enzyme involves a self-maturation process in which the active site pyruvoyl group is generated from an internal serine residue via an autocatalytic post-translational modification. Two non-identical subunits are generated from the proenzyme in this reaction, and the pyruvate is formed at the N-terminus of the alpha chain, which is derived from the carboxyl end of the proenzyme. The autoendoproteolytic cleavage occurs by a canonical serine protease mechanism, in which the side chain hydroxyl group of the serine supplies its oxygen atom to form the C-terminus of the beta chain, while the remainder of the serine residue undergoes an oxidative deamination to produce ammonia and the pyruvoyl prosthetic group on the alpha chain. During this reaction, the Ser that is part of the protease active site of the proenzyme becomes the pyruvoyl prosthetic group, which constitutes an essential element of the active site of the mature decarboxylase.

The protein resides in the cell membrane. It carries out the reaction a 1,2-diacyl-sn-glycero-3-phospho-L-serine + H(+) = a 1,2-diacyl-sn-glycero-3-phosphoethanolamine + CO2. The protein operates within phospholipid metabolism; phosphatidylethanolamine biosynthesis; phosphatidylethanolamine from CDP-diacylglycerol: step 2/2. Its function is as follows. Catalyzes the formation of phosphatidylethanolamine (PtdEtn) from phosphatidylserine (PtdSer). This is Phosphatidylserine decarboxylase proenzyme from Klebsiella pneumoniae (strain 342).